A 159-amino-acid polypeptide reads, in one-letter code: MRCPFCRHDDTQVVDSRVSEDGAAIRRRRRCSACDKRFTTYERVELALPAVVKKDGSRTEFDRRKIVASMKLALRKRPVAADAIDAAVARIEYQLLASGEREVRSEKLGELVMNELRQLDTIAYVRFASVYRRFEDVSEFADVIEEFRRAAPAKPPRKR.

A zinc finger spans residues Cys-3 to Cys-34. The region spanning Pro-49–Glu-139 is the ATP-cone domain.

It belongs to the NrdR family. Zn(2+) is required as a cofactor.

Its function is as follows. Negatively regulates transcription of bacterial ribonucleotide reductase nrd genes and operons by binding to NrdR-boxes. In Burkholderia thailandensis (strain ATCC 700388 / DSM 13276 / CCUG 48851 / CIP 106301 / E264), this protein is Transcriptional repressor NrdR.